The chain runs to 523 residues: MAGVSYAAPWWVSLLHRLPHFDLSWEATSSQFRPEDTDYQQALLLLGAAALACLALDLLFLLFYSFWLCCRRRKSEEHLDADCCCTAWCVIIATLVCSAGIAVGFYGNGETSDGIHRATYSLRHANRTVAGVQDRVWDTAVGLNHTAEPSLQTLERQLAGRPEPLRAVQRLQGLLETLLGYTAAIPFWRNTAVSLEVLAEQVDLYDWYRWLGYLGLLLLDVIICLLVLVGLIRSSKGILVGVCLLGVLALVISWGALGLELAVSVGSSDFCVDPDAYVTKMVEEYSVLSGDILQYYLACSPRAANPFQQKLSGSHKALVEMQDVVAELLRTVPWEQPATKDPLLRVQEVLNGTEVNLQHLTALVDCRSLHLDYVQALTGFCYDGVEGLIYLALFSFVTALMFSSIVCSVPHTWQQKRGPDEDGEEEAAPGPRQAHDSLYRVHMPSLYSCGSSYGSETSIPAAAHTVSNAPVTEYMSQNANFQNPRCENTPLIGRESPPPSYTSSMRAKYLATSQPRPDSSGSH.

At 1-42 (MAGVSYAAPWWVSLLHRLPHFDLSWEATSSQFRPEDTDYQQA) the chain is on the extracellular side. The helical transmembrane segment at 43 to 63 (LLLLGAAALACLALDLLFLLF) threads the bilayer. Over 64-86 (YSFWLCCRRRKSEEHLDADCCCT) the chain is Cytoplasmic. Residues 87 to 107 (AWCVIIATLVCSAGIAVGFYG) form a helical membrane-spanning segment. Residues 108 to 211 (NGETSDGIHR…VDLYDWYRWL (104 aa)) are Extracellular-facing. The Ca(2+) site is built by Glu-110 and Asp-113. N-linked (GlcNAc...) asparagine glycans are attached at residues Asn-126 and Asn-144. The helical transmembrane segment at 212-232 (GYLGLLLLDVIICLLVLVGLI) threads the bilayer. The Cytoplasmic segment spans residues 233-236 (RSSK). The helical transmembrane segment at 237–257 (GILVGVCLLGVLALVISWGAL) threads the bilayer. The Extracellular portion of the chain corresponds to 258-386 (GLELAVSVGS…LTGFCYDGVE (129 aa)). 2 cysteine pairs are disulfide-bonded: Cys-271/Cys-381 and Cys-299/Cys-366. Asn-351 carries N-linked (GlcNAc...) asparagine glycosylation. A helical membrane pass occupies residues 387-407 (GLIYLALFSFVTALMFSSIVC). Residues 408 to 523 (SVPHTWQQKR…QPRPDSSGSH (116 aa)) lie on the Cytoplasmic side of the membrane. Disordered stretches follow at residues 413 to 435 (WQQK…RQAH) and 482 to 523 (QNPR…SGSH). Ser-496 is subject to Phosphoserine. The PY-motif; mediates interaction with NEDD4L signature appears at 498 to 501 (PPSY). Positions 501–523 (YTSSMRAKYLATSQPRPDSSGSH) are enriched in polar residues. Residues Ser-504 and Ser-522 each carry the phosphoserine modification.

This sequence belongs to the tweety family. In terms of assembly, homotetramer; disulfide-linked. Homodimer. Interacts with NEDD4L. Ubiquitinated by NEDD4L. In terms of processing, N-Glycosylated. Contains high-mannose, hybrid and complex oligosaccharides. As to expression, expressed in excitable tissues. Expressed in the brain, heart, skeletal muscle, colon, spleen, kidney and peripheral blood leukocytes.

The protein localises to the cell membrane. The catalysed reaction is chloride(in) = chloride(out). It carries out the reaction L-glutamate(out) = L-glutamate(in). Calcium-independent, swelling-dependent volume-regulated anion channel (VRAC-swell) which plays a pivotal role in the process of regulatory volume decrease (RVD) in the brain through the efflux of anions like chloride and organic osmolytes like glutamate. Probable large-conductance Ca(2+)-activated chloride channel. The protein is Protein tweety homolog 3 (TTYH3) of Homo sapiens (Human).